Consider the following 157-residue polypeptide: Ribosome-binding factor A (157 aa).

The segment at 126–157 is disordered; sequence RARATAQYAGDADPYKHDDEPSDDFEDDSDEE. Over residues 145–157 the composition is skewed to acidic residues; it reads EPSDDFEDDSDEE.

Belongs to the RbfA family. As to quaternary structure, monomer. Binds 30S ribosomal subunits, but not 50S ribosomal subunits or 70S ribosomes.

Its subcellular location is the cytoplasm. One of several proteins that assist in the late maturation steps of the functional core of the 30S ribosomal subunit. Associates with free 30S ribosomal subunits (but not with 30S subunits that are part of 70S ribosomes or polysomes). Required for efficient processing of 16S rRNA. May interact with the 5'-terminal helix region of 16S rRNA. The protein is Ribosome-binding factor A of Bifidobacterium longum (strain DJO10A).